The chain runs to 2215 residues: Unconventional myosin-VIIa (2215 aa).

A Myosin motor domain is found at 65-741; that stretch reads HGVEDMIRLG…HDMLLEVERD (677 aa). 158 to 165 serves as a coordination point for ATP; it reads GESGAGKT. Positions 632-639 are actin-binding; that stretch reads FVRCIKPN. IQ domains are found at residues 745 to 765, 768 to 788, 791 to 811, 814 to 834, and 837 to 857; these read TDRVILLQKVIRGFKDRSNFL, KSAATLIQRHWRGHHCRKNYE, RLGFLRLQALHRSRKLHKQYR, RQRIIEFQARCRAYLVRKAFR, and LWAVITVQAYARGMIARRLHR. The segment at 858 to 935 is SAH; sequence RLRVEYQRRL…LEQMEKARHE (78 aa). A MyTH4 1 domain is found at 1017–1253; that stretch reads YTRRPLKQPL…PSWLELQATK (237 aa). The FERM 1 domain occupies 1258-1602; that stretch reads IMLPVTFMDG…LVVTFLEGLR (345 aa). Position 1563 is a phosphothreonine (T1563). Residue S1569 is modified to Phosphoserine. T1571 is subject to Phosphothreonine. One can recognise an SH3 domain in the interval 1603 to 1672; that stretch reads KRSKYVVALQ…PTDCVYVMPT (70 aa). Positions 1747 to 1896 constitute a MyTH4 2 domain; the sequence is HTREPLKQAL…PHLVEVEAIQ (150 aa). The 304-residue stretch at 1902-2205 folds into the FERM 2 domain; the sequence is IFHKVYFPDD…SYISQMLTAM (304 aa).

It belongs to the TRAFAC class myosin-kinesin ATPase superfamily. Myosin family. In terms of assembly, might homodimerize in a two headed molecule through the formation of a coiled-coil rod. Identified in a complex with USH1C and USH1G. Interacts with MYRIP. Interacts with RPE65. Interacts with CIB2. May interact with CALM. Interacts with WHRN. Interacts with PLEKHB1 (via PH domain). Interacts with PCDH15. Interacts with TWF2. Interacts with USH1G. Interacts with MYH9. Interacts (via MyTH4-FERM domains) with cytoplasmic regions of ADGRV1 and USH2A. Interacts with PDZD7 (via MyTH4-FERM domains). Interacts with CALML4. As to expression, detected in mechanosensory stereocilia of cochlea hair cells (at protein level). Expressed in the retina, cochlea, kidney and liver.

It localises to the cytoplasm. Its subcellular location is the cell cortex. The protein localises to the cytoskeleton. The protein resides in the synapse. In terms of biological role, myosins are actin-based motor molecules with ATPase activity. Unconventional myosins serve in intracellular movements. Their highly divergent tails bind to membranous compartments, which are then moved relative to actin filaments. In the retina, plays an important role in the renewal of the outer photoreceptor disks. Plays an important role in the distribution and migration of retinal pigment epithelial (RPE) melanosomes and phagosomes, and in the regulation of opsin transport in retinal photoreceptors. Mediates intracellular transport of RPE65 in the retina pigment epithelium. In the inner ear, plays an important role in differentiation, morphogenesis and organization of cochlear hair cell bundles. Motor protein that is a part of the functional network formed by USH1C, USH1G, CDH23 and MYO7A that mediates mechanotransduction in cochlear hair cells. Required for normal hearing. Involved in hair-cell vesicle trafficking of aminoglycosides, which are known to induce ototoxicity. The chain is Unconventional myosin-VIIa (Myo7a) from Mus musculus (Mouse).